The following is a 616-amino-acid chain: Probable Xaa-Pro aminopeptidase P (616 aa).

The Mn(2+) site is built by Asp413, Asp424, Glu522, and Glu536.

This sequence belongs to the peptidase M24B family. Mn(2+) is required as a cofactor.

It carries out the reaction Release of any N-terminal amino acid, including proline, that is linked to proline, even from a dipeptide or tripeptide.. In terms of biological role, catalyzes the removal of a penultimate prolyl residue from the N-termini of peptides. The chain is Probable Xaa-Pro aminopeptidase P (AMPP) from Paracoccidioides brasiliensis (strain Pb18).